The following is a 256-amino-acid chain: Low molecular mass lipoprotein PBMHP-6 (256 aa).

The first 19 residues, 1-19, serve as a signal peptide directing secretion; it reads MRLTLFAFVLAVCALASNA.

The protein belongs to the 30 kDa lipoprotein family.

It is found in the secreted. This Bombyx mori (Silk moth) protein is Low molecular mass lipoprotein PBMHP-6.